Consider the following 862-residue polypeptide: DNA topoisomerase 3-beta-1 (862 aa).

Residues 3–153 (TVLMVAEKPS…EKTVFRARFS (151 aa)) enclose the Toprim domain. A Topo IA-type catalytic domain is found at 171–593 (DHNEALSVDA…HTLDIFKRKF (423 aa)). The active-site O-(5'-phospho-DNA)-tyrosine intermediate is Tyr-336. The tract at residues 820 to 855 (HPMHRGGPGRRQGRGRGRGRRPPGKPNPRRPKDKMS) is disordered. A compositionally biased stretch (basic residues) spans 821-851 (PMHRGGPGRRQGRGRGRGRRPPGKPNPRRPK).

It belongs to the type IA topoisomerase family. Highly expressed in testis.

The catalysed reaction is ATP-independent breakage of single-stranded DNA, followed by passage and rejoining.. In terms of biological role, releases the supercoiling and torsional tension of DNA introduced during the DNA replication and transcription by transiently cleaving and rejoining one strand of the DNA duplex. Introduces a single-strand break via transesterification at a target site in duplex DNA. The scissile phosphodiester is attacked by the catalytic tyrosine of the enzyme, resulting in the formation of a DNA-(5'-phosphotyrosyl)-enzyme intermediate and the expulsion of a 3'-OH DNA strand. The free DNA strand than undergoes passage around the unbroken strand thus removing DNA supercoils. Finally, in the religation step, the DNA 3'-OH attacks the covalent intermediate to expel the active-site tyrosine and restore the DNA phosphodiester backbone. Possesses negatively supercoiled DNA relaxing activity. This chain is DNA topoisomerase 3-beta-1 (Top3b), found in Mus musculus (Mouse).